We begin with the raw amino-acid sequence, 194 residues long: dCTP deaminase (194 aa).

Residues 110 to 115 (RSSLAR), D128, 136 to 138 (VLE), Y171, K178, and Q182 contribute to the dCTP site. Catalysis depends on E138, which acts as the Proton donor/acceptor.

Belongs to the dCTP deaminase family. As to quaternary structure, homotrimer.

The catalysed reaction is dCTP + H2O + H(+) = dUTP + NH4(+). It functions in the pathway pyrimidine metabolism; dUMP biosynthesis; dUMP from dCTP (dUTP route): step 1/2. Catalyzes the deamination of dCTP to dUTP. This chain is dCTP deaminase, found in Psychromonas ingrahamii (strain DSM 17664 / CCUG 51855 / 37).